A 223-amino-acid polypeptide reads, in one-letter code: Imidazoleglycerol-phosphate dehydratase (223 aa).

The protein belongs to the imidazoleglycerol-phosphate dehydratase family.

The enzyme catalyses D-erythro-1-(imidazol-4-yl)glycerol 3-phosphate = 3-(imidazol-4-yl)-2-oxopropyl phosphate + H2O. Its pathway is amino-acid biosynthesis; L-histidine biosynthesis; L-histidine from 5-phospho-alpha-D-ribose 1-diphosphate: step 6/9. The polypeptide is Imidazoleglycerol-phosphate dehydratase (HIS3) (Candida albicans (Yeast)).